Consider the following 519-residue polypeptide: bZIP transcription factor 30 (519 aa).

Disordered regions lie at residues 1–30, 45–83, 108–202, 222–295, and 315–339; these read MGGG…IPKH, FRHP…QPSS, TGAG…RKPE, VLNS…TGRH, and SSLK…NSSA. Over residues 51-61 the composition is skewed to pro residues; the sequence is GAPPPPIPPIS. Residues 149–173 show a composition bias toward polar residues; it reads SDVTFGFSSMMSQNQKSPPLSSLER. Residues 187 to 202 show a composition bias toward basic and acidic residues; the sequence is VKKEPREGFYKGRKPE. Low complexity-rich tracts occupy residues 244-268 and 317-329; these read SRGS…SASG and LKLP…KVSP. Residues 330–339 are compositionally biased toward polar residues; the sequence is TNSGEGNSSA. The interval 372 to 393 is basic motif; that stretch reads KRVKRILANRVSAARSKERKTR. Positions 386 to 460 form a coiled coil; the sequence is RSKERKTRYM…SEKLNEEVQR (75 aa). A leucine-zipper region spans residues 398–433; it reads LEHKVQTLQTEATTLSAQLTHLQRDSMGLTNQNSEL. The segment at 465–519 is disordered; that stretch reads IGEPNRRQSGSSSSESKMSLNPEMFQQLSISQLQHQQMQHSNQCSTMKAKHTSND. Low complexity-rich tracts occupy residues 473 to 483 and 490 to 509; these read SGSSSSESKMS and QQLS…NQCS.

As to quaternary structure, interacts with WUS, HEC1, KNAT1, KNAT2, HAT1, BEL1, and NGA1. As to expression, expressed in inflorescence meristem, floral organ primordia, gynoecia, ovules and carpel margin meristem.

The protein localises to the nucleus. Its function is as follows. Transcription factor that acts as a repressor of reproductive development, meristem size and plant growth. Acts as a transcriptional repressor in inflorescence tissues. Interacts with well known regulators of meristem and gynoecium development such as WUS, HEC1, KNAT1, KNAT2, HAT1, BEL1 and NGA1. Acts as a positive regulator of JAG and OFP1 expression in developing gynoecia. This chain is bZIP transcription factor 30, found in Arabidopsis thaliana (Mouse-ear cress).